We begin with the raw amino-acid sequence, 417 residues long: UDP-N-acetylmuramoylalanine--D-glutamate ligase (417 aa).

104–110 contributes to the ATP binding site; sequence GSNGKST.

The protein belongs to the MurCDEF family.

It is found in the cytoplasm. The catalysed reaction is UDP-N-acetyl-alpha-D-muramoyl-L-alanine + D-glutamate + ATP = UDP-N-acetyl-alpha-D-muramoyl-L-alanyl-D-glutamate + ADP + phosphate + H(+). The protein operates within cell wall biogenesis; peptidoglycan biosynthesis. In terms of biological role, cell wall formation. Catalyzes the addition of glutamate to the nucleotide precursor UDP-N-acetylmuramoyl-L-alanine (UMA). The protein is UDP-N-acetylmuramoylalanine--D-glutamate ligase of Francisella tularensis subsp. novicida (strain U112).